The primary structure comprises 335 residues: Histidinol-phosphate aminotransferase (335 aa).

The residue at position 202 (K202) is an N6-(pyridoxal phosphate)lysine.

This sequence belongs to the class-II pyridoxal-phosphate-dependent aminotransferase family. Histidinol-phosphate aminotransferase subfamily. Homodimer. Requires pyridoxal 5'-phosphate as cofactor.

The enzyme catalyses L-histidinol phosphate + 2-oxoglutarate = 3-(imidazol-4-yl)-2-oxopropyl phosphate + L-glutamate. The protein operates within amino-acid biosynthesis; L-histidine biosynthesis; L-histidine from 5-phospho-alpha-D-ribose 1-diphosphate: step 7/9. In Thermotoga sp. (strain RQ2), this protein is Histidinol-phosphate aminotransferase.